The chain runs to 369 residues: Cell division protein FtsZ (369 aa).

Residues 27–31 (GAGNN), 119–121 (GTG), Glu150, and Asn189 each bind GTP.

Belongs to the FtsZ family. As to quaternary structure, homodimer. Polymerizes to form a dynamic ring structure in a strictly GTP-dependent manner. Interacts directly with several other division proteins.

The protein resides in the cytoplasm. Functionally, essential cell division protein that forms a contractile ring structure (Z ring) at the future cell division site. The regulation of the ring assembly controls the timing and the location of cell division. One of the functions of the FtsZ ring is to recruit other cell division proteins to the septum to produce a new cell wall between the dividing cells. Binds GTP and shows GTPase activity. The sequence is that of Cell division protein FtsZ from Mycoplasma genitalium (strain ATCC 33530 / DSM 19775 / NCTC 10195 / G37) (Mycoplasmoides genitalium).